Here is a 386-residue protein sequence, read N- to C-terminus: Terpene cyclase 6 (386 aa).

The Mg(2+) site is built by D128, N276, and S280. Positions 128-132 (DDEID) match the D(D/E)XX(D/E) motif motif. An NSE motif motif is present at residues 276–284 (NEILSLQKE). The WxxxxxRY motif motif lies at 360–367 (WSYNCERY). (2E,6E)-farnesyl diphosphate contacts are provided by R366 and Y367.

The protein belongs to the terpene synthase family. Homodimer. Requires Mg(2+) as cofactor.

It carries out the reaction (2E,6E)-farnesyl diphosphate + H2O = trichobrasilenol + diphosphate. The catalysed reaction is (2E,6E)-farnesyl diphosphate = alpha-humulene + diphosphate. It catalyses the reaction (2E,6E)-farnesyl diphosphate = (-)-(E)-beta-caryophyllene + diphosphate. The enzyme catalyses (2E,6E)-farnesyl diphosphate = (E)-2-epi-beta-caryophyllene + diphosphate. It carries out the reaction (2E,6E)-farnesyl diphosphate + H2O = (+)-isoafricanol + diphosphate. The catalysed reaction is (2E,6E)-farnesyl diphosphate + H2O = (+)-(2S,3R,9R)-pristinol + diphosphate. It catalyses the reaction (2E,6E)-farnesyl diphosphate = african-3-ene + diphosphate. The enzyme catalyses (2E,6E)-farnesyl diphosphate = african-1-ene + diphosphate. It functions in the pathway sesquiterpene biosynthesis. Functionally, terpene cyclase that is able to convert FPP into a mixture of sesquiterpene hydrocarbons and alcohols. The main product is trichobrasilenol. Additionally, side products include alpha-humulene, caryophyllene, 2-epi-caryophyllene, african-3-ene, african-1-ene, isoafricanol and pristinol. Does not accept GPP, GGPP, and GFPP as substrates. This chain is Terpene cyclase 6, found in Hypocrea atroviridis (Trichoderma atroviride).